We begin with the raw amino-acid sequence, 46 residues long: Acetylajmalan esterase (46 aa).

N39 carries an N-linked (GlcNAc...) asparagine glycan.

Belongs to the 'GDSL' lipolytic enzyme family.

The enzyme catalyses 17-O-acetylajmaline + H2O = ajmaline + acetate + H(+). It carries out the reaction 17-O-acetylnorajmaline + H2O = norajmaline + acetate + H(+). Deacetylates 17-O-acetylajmaline and 17-O-acetylnorajmaline, but is inactive toward other acetylated alkaloids. The chain is Acetylajmalan esterase from Rauvolfia verticillata (Common devil-pepper).